A 634-amino-acid chain; its full sequence is Probable potassium transport system protein Kup (634 aa).

The next 12 membrane-spanning stretches (helical) occupy residues 19 to 39 (AIGLMVGAVGVCYGDIGTSPL), 62 to 82 (VLSLIFWSLVWVVSIKYVIFV), 113 to 133 (FVVVAGLIGAALFYGDSMITP), 150 to 170 (GLEHWTVPLALIVLIGLFLIQ), 177 to 197 (IGILFGPVMVLWFGALAALGV), 225 to 245 (IGVAILGATVLALTGAEALYA), 259 to 279 (WFLLVLPALVLNYFGQGATIL), 291 to 311 (LLAPGWALLPMVALSTLATVI), 349 to 369 (IYIGGVNWALMVGVVLLVLGF), 379 to 399 (YGVAVTGTMLITTLLMGVVIW), 406 to 426 (LWLGVPFFCVMLAVDSLFFAA), and 431 to 451 (VIQGGAFPVIAGIVIFILMST).

Belongs to the HAK/KUP transporter (TC 2.A.72) family.

The protein localises to the cell inner membrane. It catalyses the reaction K(+)(in) + H(+)(in) = K(+)(out) + H(+)(out). Functionally, transport of potassium into the cell. Likely operates as a K(+):H(+) symporter. In Pseudomonas aeruginosa (strain UCBPP-PA14), this protein is Probable potassium transport system protein Kup.